The primary structure comprises 897 residues: Schlafen family member 13 (897 aa).

Positions 2 to 355 (EANHCSLGVY…WVEKMMDADP (354 aa)) are n'-domain region. Active-site residues include Glu208 and Glu213. 3 residues coordinate Zn(2+): His284, Cys286, and Cys321. 599–606 (GLPGSGKT) is an ATP binding site.

The protein belongs to the Schlafen family. Subgroup III subfamily. Mg(2+) serves as cofactor.

The protein localises to the cytoplasm. Endoribonuclease that cleaves tRNAs and rRNAs. Cleaves tRNAs 11 nucleotides from the 3'-terminus at the acceptor stem. Does not act on tRNA(Sec). Able to restrict HIV-1 virus replication; ability to inhibit HIV-1 replication is dependent on endoribonuclease activity. This is Schlafen family member 13 from Homo sapiens (Human).